A 340-amino-acid chain; its full sequence is Ferrochelatase (340 aa).

Residues histidine 189 and glutamate 292 each coordinate Fe cation.

This sequence belongs to the ferrochelatase family.

It localises to the cytoplasm. The catalysed reaction is heme b + 2 H(+) = protoporphyrin IX + Fe(2+). The protein operates within porphyrin-containing compound metabolism; protoheme biosynthesis; protoheme from protoporphyrin-IX: step 1/1. Its function is as follows. Catalyzes the ferrous insertion into protoporphyrin IX. The sequence is that of Ferrochelatase from Pseudomonas paraeruginosa (strain DSM 24068 / PA7) (Pseudomonas aeruginosa (strain PA7)).